A 352-amino-acid polypeptide reads, in one-letter code: N-acetyl-gamma-glutamyl-phosphate reductase (352 aa).

The active site involves cysteine 155.

This sequence belongs to the NAGSA dehydrogenase family. Type 1 subfamily.

Its subcellular location is the cytoplasm. It catalyses the reaction N-acetyl-L-glutamate 5-semialdehyde + phosphate + NADP(+) = N-acetyl-L-glutamyl 5-phosphate + NADPH + H(+). It participates in amino-acid biosynthesis; L-arginine biosynthesis; N(2)-acetyl-L-ornithine from L-glutamate: step 3/4. Its function is as follows. Catalyzes the NADPH-dependent reduction of N-acetyl-5-glutamyl phosphate to yield N-acetyl-L-glutamate 5-semialdehyde. This chain is N-acetyl-gamma-glutamyl-phosphate reductase, found in Gloeothece citriformis (strain PCC 7424) (Cyanothece sp. (strain PCC 7424)).